The chain runs to 496 residues: Probable uroporphyrinogen-III C-methyltransferase (496 aa).

Belongs to the precorrin methyltransferase family.

The enzyme catalyses uroporphyrinogen III + 2 S-adenosyl-L-methionine = precorrin-2 + 2 S-adenosyl-L-homocysteine + H(+). Its function is as follows. Siroheme synthase involved in methionine biosynthesis. In Schizosaccharomyces pombe (strain 972 / ATCC 24843) (Fission yeast), this protein is Probable uroporphyrinogen-III C-methyltransferase.